A 159-amino-acid polypeptide reads, in one-letter code: Endoribonuclease YbeY (159 aa).

3 residues coordinate Zn(2+): His126, His130, and His136.

This sequence belongs to the endoribonuclease YbeY family. It depends on Zn(2+) as a cofactor.

The protein resides in the cytoplasm. In terms of biological role, single strand-specific metallo-endoribonuclease involved in late-stage 70S ribosome quality control and in maturation of the 3' terminus of the 16S rRNA. This is Endoribonuclease YbeY from Thermodesulfovibrio yellowstonii (strain ATCC 51303 / DSM 11347 / YP87).